The chain runs to 34 residues: U10-ctenitoxin-Pr1a (34 aa).

Disulfide bonds link cysteine 2–cysteine 15, cysteine 9–cysteine 20, cysteine 14–cysteine 31, and cysteine 22–cysteine 29.

In terms of tissue distribution, expressed by the venom gland.

Its subcellular location is the secreted. Non-toxic to mice and insects. In Phoneutria reidyi (Brazilian Amazonian armed spider), this protein is U10-ctenitoxin-Pr1a.